The chain runs to 158 residues: MYLLTDEVARELKKPFGKVYKELPSIDGKVVSIGDVTTKHLLSNGIIPNLSILDFKTKRNIPVNIPHKFKTIFEVENPQGCISDEAIERIKYLSTIHDRDMALIIKGEEDLLTIPVIKYFPEDTSVIYGQPDEGMVLLKITDELKQKIEKLLKDMEER.

6 residues coordinate GTP: Asp-35, Val-36, Asp-54, Lys-56, Glu-109, and Asp-132.

Belongs to the GTP-dependent DPCK family.

The catalysed reaction is 3'-dephospho-CoA + GTP = GDP + CoA + H(+). It participates in cofactor biosynthesis; coenzyme A biosynthesis. Its function is as follows. Catalyzes the GTP-dependent phosphorylation of the 3'-hydroxyl group of dephosphocoenzyme A to form coenzyme A (CoA). The polypeptide is GTP-dependent dephospho-CoA kinase (Methanococcus maripaludis (strain C7 / ATCC BAA-1331)).